The chain runs to 278 residues: 4-deoxy-L-threo-5-hexosulose-uronate ketol-isomerase (278 aa).

The Zn(2+) site is built by His-196, His-198, Glu-203, and His-245.

Belongs to the KduI family. Homohexamer. Requires Zn(2+) as cofactor.

It catalyses the reaction 5-dehydro-4-deoxy-D-glucuronate = 3-deoxy-D-glycero-2,5-hexodiulosonate. Its pathway is glycan metabolism; pectin degradation; 2-dehydro-3-deoxy-D-gluconate from pectin: step 4/5. Catalyzes the isomerization of 5-dehydro-4-deoxy-D-glucuronate to 3-deoxy-D-glycero-2,5-hexodiulosonate. This chain is 4-deoxy-L-threo-5-hexosulose-uronate ketol-isomerase, found in Escherichia coli (strain SMS-3-5 / SECEC).